The chain runs to 385 residues: Protein pelota homolog (385 aa).

The protein belongs to the eukaryotic release factor 1 family. Pelota subfamily. In terms of assembly, component of the Pelota-HBS1L complex, also named Dom34-Hbs1 complex, composed of PELO and HBS1L. A divalent metal cation serves as cofactor.

It localises to the cytoplasm. Component of the Pelota-HBS1L complex, a complex that recognizes stalled ribosomes and triggers the No-Go Decay (NGD) pathway. In the Pelota-HBS1L complex, PELO recognizes ribosomes stalled at the 3' end of an mRNA and engages stalled ribosomes by destabilizing mRNA in the mRNA channel. Following mRNA extraction from stalled ribosomes by the SKI complex, the Pelota-HBS1L complex promotes recruitment of ABCE1, which drives the disassembly of stalled ribosomes, followed by degradation of damaged mRNAs as part of the NGD pathway. The protein is Protein pelota homolog (pelo) of Danio rerio (Zebrafish).